Consider the following 273-residue polypeptide: ATP synthase subunit delta (273 aa).

The protein belongs to the ATPase delta chain family. F-type ATPases have 2 components, F(1) - the catalytic core - and F(0) - the membrane proton channel. F(1) has five subunits: alpha(3), beta(3), gamma(1), delta(1), epsilon(1). F(0) has three main subunits: a(1), b(2) and c(10-14). The alpha and beta chains form an alternating ring which encloses part of the gamma chain. F(1) is attached to F(0) by a central stalk formed by the gamma and epsilon chains, while a peripheral stalk is formed by the delta and b chains.

It localises to the cell membrane. In terms of biological role, f(1)F(0) ATP synthase produces ATP from ADP in the presence of a proton or sodium gradient. F-type ATPases consist of two structural domains, F(1) containing the extramembraneous catalytic core and F(0) containing the membrane proton channel, linked together by a central stalk and a peripheral stalk. During catalysis, ATP synthesis in the catalytic domain of F(1) is coupled via a rotary mechanism of the central stalk subunits to proton translocation. Functionally, this protein is part of the stalk that links CF(0) to CF(1). It either transmits conformational changes from CF(0) to CF(1) or is implicated in proton conduction. The chain is ATP synthase subunit delta from Streptomyces avermitilis (strain ATCC 31267 / DSM 46492 / JCM 5070 / NBRC 14893 / NCIMB 12804 / NRRL 8165 / MA-4680).